The primary structure comprises 549 residues: Probable chaperonin-like protein PrmG (549 aa).

It belongs to the chaperonin (HSP60) family.

Probably plays an essential role in the productive folding of PrmA, and thus in the formation of the active PrmABCD complex. The chain is Probable chaperonin-like protein PrmG (prmG) from Rhodococcus jostii (strain RHA1).